Consider the following 1102-residue polypeptide: DNA-directed RNA polymerase subunit beta (1102 aa).

A disordered region spans residues 1081–1102; the sequence is LPGKRTPSRPIYESLSTEGNQD.

This sequence belongs to the RNA polymerase beta chain family. As to quaternary structure, in cyanobacteria the RNAP catalytic core is composed of 2 alpha, 1 beta, 1 beta', 1 gamma and 1 omega subunit. When a sigma factor is associated with the core the holoenzyme is formed, which can initiate transcription.

It catalyses the reaction RNA(n) + a ribonucleoside 5'-triphosphate = RNA(n+1) + diphosphate. Its function is as follows. DNA-dependent RNA polymerase catalyzes the transcription of DNA into RNA using the four ribonucleoside triphosphates as substrates. The protein is DNA-directed RNA polymerase subunit beta of Trichodesmium erythraeum (strain IMS101).